The following is a 215-amino-acid chain: MVVLVEQKYQELLNMLPSVSRETMENLIQFESLIIQWNAHINLISAATVPFLWTRHILDSAQIYPLYSQCLHWCDLGSGGGFPAIVIAIFLKEKQKGHIDLIESNGKKVAFLRTVIAQLNLPATVYHCRIEDVYQKINAPEIITARGLASLNTLLQLTFPWLKQKTIALLQKGRDYAIEVENAYANWRFNLLKHQSKIDENSVILEISHVRSCQG.

Residues Gly77, Phe82, 130 to 131 (IE), and Arg146 each bind S-adenosyl-L-methionine.

This sequence belongs to the methyltransferase superfamily. RNA methyltransferase RsmG family.

Its subcellular location is the cytoplasm. It catalyses the reaction guanosine(527) in 16S rRNA + S-adenosyl-L-methionine = N(7)-methylguanosine(527) in 16S rRNA + S-adenosyl-L-homocysteine. Its function is as follows. Specifically methylates the N7 position of guanine in position 527 of 16S rRNA. The chain is Ribosomal RNA small subunit methyltransferase G from Bartonella bacilliformis (strain ATCC 35685 / KC583 / Herrer 020/F12,63).